Consider the following 531-residue polypeptide: Flavin-containing monooxygenase 3 (531 aa).

FAD contacts are provided by residues 9–13, Glu-32, 40–41, and 61–62; these read GAGIS, LW, and NS. NADP(+)-binding positions include 60-61 and 195-198; these read TN and SGCD. Residues 511-531 traverse the membrane as a helical segment; the sequence is FSPWLKLLAIAVLLIAAVLVF.

Belongs to the FMO family. The cofactor is FAD. Liver.

Its subcellular location is the microsome membrane. It is found in the endoplasmic reticulum membrane. It catalyses the reaction trimethylamine + NADPH + O2 = trimethylamine N-oxide + NADP(+) + H2O. The catalysed reaction is N,N-dimethylaniline + NADPH + O2 + H(+) = N,N-dimethylaniline N-oxide + NADP(+) + H2O. It carries out the reaction hypotaurine + NADPH + O2 + H(+) = taurine + NADP(+) + H2O. The enzyme catalyses (S)-nicotine + NADPH + O2 = trans-(S)-nicotine N(1')-oxide + NADP(+) + H2O. It catalyses the reaction albendazole + NADPH + O2 + H(+) = albendazole S-oxide + NADP(+) + H2O. Its function is as follows. Essential hepatic enzyme that catalyzes the oxygenation of a wide variety of nitrogen- and sulfur-containing compounds including drugs as well as dietary compounds. Plays an important role in the metabolism of trimethylamine (TMA), via the production of trimethylamine N-oxide (TMAO) metabolite. TMA is generated by the action of gut microbiota using dietary precursors such as choline, choline containing compounds, betaine or L-carnitine. By regulating TMAO concentration, FMO3 directly impacts both platelet responsiveness and rate of thrombus formation. This Oryctolagus cuniculus (Rabbit) protein is Flavin-containing monooxygenase 3 (FMO3).